We begin with the raw amino-acid sequence, 281 residues long: Endonuclease III-like protein 1 (281 aa).

A mitochondrion-targeting transit peptide spans 1–17; that stretch reads MCAAAPRGGGRAARRLG. The disordered stretch occupies residues 1–60; the sequence is MCAAAPRGGGRAARRLGAATAGSRVPSAAPRYSRRTRRVPIAYEAEPKPESPGPKWEPEN. Low complexity predominate over residues 15–24; it reads RLGAATAGSR. A HhH domain is found at 168 to 192; that stretch reads KYGGDIPGTVEELVKLPGVGPKMAH. Lys189 (nucleophile; for N-glycosylase activity) is an active-site residue. Positions 259, 266, 269, and 275 each coordinate [4Fe-4S] cluster.

Belongs to the Nth/MutY family. The cofactor is [4Fe-4S] cluster.

The protein localises to the nucleus. The protein resides in the mitochondrion. The enzyme catalyses 2'-deoxyribonucleotide-(2'-deoxyribose 5'-phosphate)-2'-deoxyribonucleotide-DNA = a 3'-end 2'-deoxyribonucleotide-(2,3-dehydro-2,3-deoxyribose 5'-phosphate)-DNA + a 5'-end 5'-phospho-2'-deoxyribonucleoside-DNA + H(+). Its function is as follows. Bifunctional DNA N-glycosylase with associated apurinic/apyrimidinic (AP) lyase function that catalyzes the first step in base excision repair (BER), the primary repair pathway for the repair of oxidative DNA damage. The DNA N-glycosylase activity releases the damaged DNA base from DNA by cleaving the N-glycosidic bond, leaving an AP site. The AP lyase activity cleaves the phosphodiester bond 3' to the AP site by a beta-elimination. Primarily recognizes and repairs oxidative base damage of pyrimidines. The sequence is that of Endonuclease III-like protein 1 from Gallus gallus (Chicken).